Consider the following 260-residue polypeptide: Lipid II isoglutaminyl synthase (glutamine-hydrolyzing) subunit GatD (260 aa).

Positions 16-214 (QLNIAHLYGN…FHGPILSRNA (199 aa)) constitute a GATase cobBQ-type domain. The active-site Nucleophile is Cys107. Arg142 contacts substrate. His206 is an active-site residue.

The protein belongs to the CobB/CobQ family. GatD subfamily. Forms a heterodimer with MurT.

The catalysed reaction is beta-D-GlcNAc-(1-&gt;4)-Mur2Ac(oyl-L-Ala-gamma-D-Glu-L-Lys-D-Ala-D-Ala)-di-trans,octa-cis-undecaprenyl diphosphate + L-glutamine + ATP + H2O = beta-D-GlcNAc-(1-&gt;4)-Mur2Ac(oyl-L-Ala-D-isoglutaminyl-L-Lys-D-Ala-D-Ala)-di-trans,octa-cis-undecaprenyl diphosphate + L-glutamate + ADP + phosphate + H(+). It carries out the reaction L-glutamine + H2O = L-glutamate + NH4(+). It functions in the pathway cell wall biogenesis; peptidoglycan biosynthesis. In terms of biological role, the lipid II isoglutaminyl synthase complex catalyzes the formation of alpha-D-isoglutamine in the cell wall lipid II stem peptide. The GatD subunit catalyzes the hydrolysis of glutamine to glutamate and ammonia. The resulting ammonia molecule is channeled to the active site of MurT. The sequence is that of Lipid II isoglutaminyl synthase (glutamine-hydrolyzing) subunit GatD from Streptococcus pneumoniae (strain ATCC BAA-255 / R6).